The primary structure comprises 20 residues: Manganese peroxidase H5 (20 aa).

Belongs to the peroxidase family. Ligninase subfamily.

Its subcellular location is the secreted. It carries out the reaction 2 Mn(2+) + H2O2 + 2 H(+) = 2 Mn(3+) + 2 H2O. Functionally, catalyzes the oxidation of Mn(2+) to Mn(3+). The latter, acting as a diffusible redox mediator, is capable of oxidizing a variety of lignin compounds. The protein is Manganese peroxidase H5 of Phanerodontia chrysosporium (White-rot fungus).